A 228-amino-acid polypeptide reads, in one-letter code: Cytochrome c oxidase subunit 2 (228 aa).

Over 1–26 the chain is Mitochondrial intermembrane; sequence MSTWANLGLQDSASPLMEQLIFFHDH. Residues 27–48 form a helical membrane-spanning segment; the sequence is ALLILVMITVLVGYLMFMLFFN. Residues 49 to 62 lie on the Mitochondrial matrix side of the membrane; it reads NYVNRFLLHGQLIE. The chain crosses the membrane as a helical span at residues 63–82; the sequence is MIWTILPAIILLFIALPSLR. Residues 83-228 lie on the Mitochondrial intermembrane side of the membrane; the sequence is LLYLLDEINE…FIKWISSNNS (146 aa). H161, C196, E198, C200, H204, and M207 together coordinate Cu cation. E198 provides a ligand contact to Mg(2+).

The protein belongs to the cytochrome c oxidase subunit 2 family. Component of the cytochrome c oxidase (complex IV, CIV), a multisubunit enzyme composed of a catalytic core of 3 subunits and several supernumerary subunits. The complex exists as a monomer or a dimer and forms supercomplexes (SCs) in the inner mitochondrial membrane with ubiquinol-cytochrome c oxidoreductase (cytochrome b-c1 complex, complex III, CIII). It depends on Cu cation as a cofactor.

The protein resides in the mitochondrion inner membrane. It carries out the reaction 4 Fe(II)-[cytochrome c] + O2 + 8 H(+)(in) = 4 Fe(III)-[cytochrome c] + 2 H2O + 4 H(+)(out). In terms of biological role, component of the cytochrome c oxidase, the last enzyme in the mitochondrial electron transport chain which drives oxidative phosphorylation. The respiratory chain contains 3 multisubunit complexes succinate dehydrogenase (complex II, CII), ubiquinol-cytochrome c oxidoreductase (cytochrome b-c1 complex, complex III, CIII) and cytochrome c oxidase (complex IV, CIV), that cooperate to transfer electrons derived from NADH and succinate to molecular oxygen, creating an electrochemical gradient over the inner membrane that drives transmembrane transport and the ATP synthase. Cytochrome c oxidase is the component of the respiratory chain that catalyzes the reduction of oxygen to water. Electrons originating from reduced cytochrome c in the intermembrane space (IMS) are transferred via the dinuclear copper A center (CU(A)) of subunit 2 and heme A of subunit 1 to the active site in subunit 1, a binuclear center (BNC) formed by heme A3 and copper B (CU(B)). The BNC reduces molecular oxygen to 2 water molecules using 4 electrons from cytochrome c in the IMS and 4 protons from the mitochondrial matrix. The polypeptide is Cytochrome c oxidase subunit 2 (mt:CoII) (Drosophila yakuba (Fruit fly)).